The sequence spans 195 residues: Xanthine phosphoribosyltransferase (195 aa).

Positions 20 and 27 each coordinate xanthine. A 5-phospho-alpha-D-ribose 1-diphosphate-binding site is contributed by 128-132 (ANGQA). Lysine 156 contributes to the xanthine binding site.

The protein belongs to the purine/pyrimidine phosphoribosyltransferase family. Xpt subfamily. As to quaternary structure, homodimer.

The protein resides in the cytoplasm. It catalyses the reaction XMP + diphosphate = xanthine + 5-phospho-alpha-D-ribose 1-diphosphate. It participates in purine metabolism; XMP biosynthesis via salvage pathway; XMP from xanthine: step 1/1. Converts the preformed base xanthine, a product of nucleic acid breakdown, to xanthosine 5'-monophosphate (XMP), so it can be reused for RNA or DNA synthesis. The protein is Xanthine phosphoribosyltransferase of Limosilactobacillus fermentum (strain NBRC 3956 / LMG 18251) (Lactobacillus fermentum).